We begin with the raw amino-acid sequence, 478 residues long: UDP-N-acetylmuramate--L-alanine ligase (478 aa).

Position 112 to 118 (112 to 118 (GTHGKTT)) interacts with ATP.

This sequence belongs to the MurCDEF family.

Its subcellular location is the cytoplasm. The catalysed reaction is UDP-N-acetyl-alpha-D-muramate + L-alanine + ATP = UDP-N-acetyl-alpha-D-muramoyl-L-alanine + ADP + phosphate + H(+). It functions in the pathway cell wall biogenesis; peptidoglycan biosynthesis. Functionally, cell wall formation. The chain is UDP-N-acetylmuramate--L-alanine ligase from Polaromonas naphthalenivorans (strain CJ2).